We begin with the raw amino-acid sequence, 89 residues long: Small ribosomal subunit protein uS15 (89 aa).

This sequence belongs to the universal ribosomal protein uS15 family. In terms of assembly, part of the 30S ribosomal subunit. Forms a bridge to the 50S subunit in the 70S ribosome, contacting the 23S rRNA.

In terms of biological role, one of the primary rRNA binding proteins, it binds directly to 16S rRNA where it helps nucleate assembly of the platform of the 30S subunit by binding and bridging several RNA helices of the 16S rRNA. Its function is as follows. Forms an intersubunit bridge (bridge B4) with the 23S rRNA of the 50S subunit in the ribosome. This chain is Small ribosomal subunit protein uS15, found in Chlorobium phaeovibrioides (strain DSM 265 / 1930) (Prosthecochloris vibrioformis (strain DSM 265)).